The sequence spans 83 residues: Cytochrome c oxidase subunit 7A2, mitochondrial (83 aa).

Residues 1-23 (MLRNLLALRQIAKRTISTSSRRQ) constitute a mitochondrion transit peptide. The Mitochondrial matrix segment spans residues 24–48 (FENKVPEKQKLFQEDNGIPVHLKGG). The residue at position 33 (K33) is an N6-acetyllysine. The helical transmembrane segment at 49 to 77 (IADALLYRATLILTVGGTAYAMYELAVAS) threads the bilayer. Topologically, residues 78–83 (FPKKQD) are mitochondrial intermembrane.

The protein belongs to the cytochrome c oxidase VIIa family. In terms of assembly, component of the cytochrome c oxidase (complex IV, CIV), a multisubunit enzyme composed of 14 subunits. The complex is composed of a catalytic core of 3 subunits MT-CO1, MT-CO2 and MT-CO3, encoded in the mitochondrial DNA, and 11 supernumerary subunits COX4I1 (or COX4I2), COX5A, COX5B, COX6A2 (or COX6A1), COX6B1 (or COX6B2), COX6C, COX7A1 (or COX7A2), COX7B, COX7C, COX8B and NDUFA4, which are encoded in the nuclear genome. The complex exists as a monomer or a dimer and forms supercomplexes (SCs) in the inner mitochondrial membrane with NADH-ubiquinone oxidoreductase (complex I, CI) and ubiquinol-cytochrome c oxidoreductase (cytochrome b-c1 complex, complex III, CIII), resulting in different assemblies (supercomplex SCI(1)III(2)IV(1) and megacomplex MCI(2)III(2)IV(2)). Interacts with PET100.

The protein resides in the mitochondrion inner membrane. Its pathway is energy metabolism; oxidative phosphorylation. In terms of biological role, component of the cytochrome c oxidase, the last enzyme in the mitochondrial electron transport chain which drives oxidative phosphorylation. The respiratory chain contains 3 multisubunit complexes succinate dehydrogenase (complex II, CII), ubiquinol-cytochrome c oxidoreductase (cytochrome b-c1 complex, complex III, CIII) and cytochrome c oxidase (complex IV, CIV), that cooperate to transfer electrons derived from NADH and succinate to molecular oxygen, creating an electrochemical gradient over the inner membrane that drives transmembrane transport and the ATP synthase. Cytochrome c oxidase is the component of the respiratory chain that catalyzes the reduction of oxygen to water. Electrons originating from reduced cytochrome c in the intermembrane space (IMS) are transferred via the dinuclear copper A center (CU(A)) of subunit 2 and heme A of subunit 1 to the active site in subunit 1, a binuclear center (BNC) formed by heme A3 and copper B (CU(B)). The BNC reduces molecular oxygen to 2 water molecules using 4 electrons from cytochrome c in the IMS and 4 protons from the mitochondrial matrix. This chain is Cytochrome c oxidase subunit 7A2, mitochondrial (COX7A2), found in Bos taurus (Bovine).